An 806-amino-acid chain; its full sequence is Leucine--tRNA ligase (806 aa).

The 'HIGH' region signature appears at 54 to 64 (SYPSGDLHMGH). Positions 571 to 575 (KMSKS) match the 'KMSKS' region motif. Lysine 574 serves as a coordination point for ATP.

Belongs to the class-I aminoacyl-tRNA synthetase family.

The protein resides in the cytoplasm. It catalyses the reaction tRNA(Leu) + L-leucine + ATP = L-leucyl-tRNA(Leu) + AMP + diphosphate. The sequence is that of Leucine--tRNA ligase from Tropheryma whipplei (strain Twist) (Whipple's bacillus).